The primary structure comprises 423 residues: Maltoporin 1 (423 aa).

The first 23 residues, 1–23 (MNTTLRALSVALAAALIAPSAFA), serve as a signal peptide directing secretion.

This sequence belongs to the porin LamB (TC 1.B.3) family. In terms of assembly, homotrimer formed of three 18-stranded antiparallel beta-barrels, containing three independent channels.

The protein localises to the cell outer membrane. The enzyme catalyses beta-maltose(in) = beta-maltose(out). In terms of biological role, involved in the transport of maltose and maltodextrins. The polypeptide is Maltoporin 1 (Klebsiella pneumoniae subsp. pneumoniae (strain ATCC 700721 / MGH 78578)).